Consider the following 173-residue polypeptide: Large ribosomal subunit protein uL10 (173 aa).

Belongs to the universal ribosomal protein uL10 family. In terms of assembly, part of the ribosomal stalk of the 50S ribosomal subunit. The N-terminus interacts with L11 and the large rRNA to form the base of the stalk. The C-terminus forms an elongated spine to which L12 dimers bind in a sequential fashion forming a multimeric L10(L12)X complex.

In terms of biological role, forms part of the ribosomal stalk, playing a central role in the interaction of the ribosome with GTP-bound translation factors. This chain is Large ribosomal subunit protein uL10, found in Cupriavidus pinatubonensis (strain JMP 134 / LMG 1197) (Cupriavidus necator (strain JMP 134)).